A 111-amino-acid polypeptide reads, in one-letter code: Ribonuclease P protein component 1 (111 aa).

Belongs to the eukaryotic/archaeal RNase P protein component 1 family. Consists of a catalytic RNA component and at least 4-5 protein subunits.

The protein localises to the cytoplasm. It carries out the reaction Endonucleolytic cleavage of RNA, removing 5'-extranucleotides from tRNA precursor.. Part of ribonuclease P, a protein complex that generates mature tRNA molecules by cleaving their 5'-ends. This chain is Ribonuclease P protein component 1, found in Hyperthermus butylicus (strain DSM 5456 / JCM 9403 / PLM1-5).